Consider the following 820-residue polypeptide: Disintegrin and metalloproteinase domain-containing protein 29 (820 aa).

Positions 1–18 (MKMLLLLHCLGVFLSCSG) are cleaved as a signal peptide. Residues 19 to 193 (HIQDEHPQYH…TQKQSSYVGW (175 aa)) constitute a propeptide that is removed on maturation. Topologically, residues 194–674 (WIHFRIVEIV…GPPPKRKKKK (481 aa)) are extracellular. One can recognise a Peptidase M12B domain in the interval 198–390 (RIVEIVVVID…RTKCLLETVH (193 aa)). 2 N-linked (GlcNAc...) asparagine glycosylation sites follow: Asn217 and Asn320. Intrachain disulfides connect Cys307/Cys384, Cys347/Cys369, and Cys349/Cys354. 7 N-linked (GlcNAc...) asparagine glycosylation sites follow: Asn368, Asn428, Asn469, Asn538, Asn545, Asn558, and Asn564. Positions 397-483 (VKRCGNGVVE…KCPDDFYVED (87 aa)) constitute a Disintegrin domain. The cysteines at positions 455 and 475 are disulfide-linked. 3 disulfide bridges follow: Cys625–Cys636, Cys630–Cys642, and Cys644–Cys653. One can recognise an EGF-like domain in the interval 625-654 (CSPAFCNKRGICNNKHHCHCNYLWDPPNCL). Residues 675-695 (KFCYLCILLLIVLFILLCCLY) traverse the membrane as a helical segment. Residues 696–820 (RLCKKSKPIK…SQSQPPVTPS (125 aa)) are Cytoplasmic-facing. The interval 706–820 (KQQDVQTPSA…SQSQPPVTPS (115 aa)) is disordered. The segment covering 715 to 727 (AKEEEKIQRRPHE) has biased composition (basic and acidic residues). A compositionally biased stretch (low complexity) spans 738 to 820 (PSQSQPPVTP…SQSQPPVTPS (83 aa)). A run of 9 repeats spans residues 739–747 (SQSQPPVTP), 748–756 (SQSHPQVMP), 757–765 (SQSQPPVTP), 766–774 (SQSQPRVMP), 775–783 (SQSQPPVMP), 784–792 (SQSHPQLTP), 793–801 (SQSQPPVTP), 802–810 (SQRQPQLMP), and 811–819 (SQSQPPVTP). Residues 739 to 819 (SQSQPPVTPS…PSQSQPPVTP (81 aa)) are 9 X 9 AA approximate repeats.

As to expression, expressed specifically in testes.

It is found in the membrane. Its function is as follows. May be involved in spermatogenesis and fertilization. Seems to be a non catalytic metalloprotease-like protein. In Homo sapiens (Human), this protein is Disintegrin and metalloproteinase domain-containing protein 29 (ADAM29).